Consider the following 330-residue polypeptide: Glucokinase (330 aa).

14 to 19 (ADIGGT) contacts ATP.

This sequence belongs to the bacterial glucokinase family.

It is found in the cytoplasm. It carries out the reaction D-glucose + ATP = D-glucose 6-phosphate + ADP + H(+). This Colwellia psychrerythraea (strain 34H / ATCC BAA-681) (Vibrio psychroerythus) protein is Glucokinase.